The chain runs to 186 residues: Ribosome-recycling factor (186 aa).

This sequence belongs to the RRF family.

The protein localises to the cytoplasm. In terms of biological role, responsible for the release of ribosomes from messenger RNA at the termination of protein biosynthesis. May increase the efficiency of translation by recycling ribosomes from one round of translation to another. The protein is Ribosome-recycling factor of Acidovorax ebreus (strain TPSY) (Diaphorobacter sp. (strain TPSY)).